The following is a 326-amino-acid chain: 4-hydroxythreonine-4-phosphate dehydrogenase (326 aa).

2 residues coordinate substrate: His134 and Thr135. Positions 164, 209, and 264 each coordinate a divalent metal cation. 3 residues coordinate substrate: Lys272, Asn281, and Arg290.

It belongs to the PdxA family. Homodimer. It depends on Zn(2+) as a cofactor. Requires Mg(2+) as cofactor. Co(2+) serves as cofactor.

It is found in the cytoplasm. The catalysed reaction is 4-(phosphooxy)-L-threonine + NAD(+) = 3-amino-2-oxopropyl phosphate + CO2 + NADH. Its pathway is cofactor biosynthesis; pyridoxine 5'-phosphate biosynthesis; pyridoxine 5'-phosphate from D-erythrose 4-phosphate: step 4/5. Catalyzes the NAD(P)-dependent oxidation of 4-(phosphooxy)-L-threonine (HTP) into 2-amino-3-oxo-4-(phosphooxy)butyric acid which spontaneously decarboxylates to form 3-amino-2-oxopropyl phosphate (AHAP). In Colwellia psychrerythraea (strain 34H / ATCC BAA-681) (Vibrio psychroerythus), this protein is 4-hydroxythreonine-4-phosphate dehydrogenase.